The primary structure comprises 87 residues: Small ribosomal subunit protein uS17 (87 aa).

Belongs to the universal ribosomal protein uS17 family. In terms of assembly, part of the 30S ribosomal subunit.

One of the primary rRNA binding proteins, it binds specifically to the 5'-end of 16S ribosomal RNA. This Cytophaga hutchinsonii (strain ATCC 33406 / DSM 1761 / CIP 103989 / NBRC 15051 / NCIMB 9469 / D465) protein is Small ribosomal subunit protein uS17.